We begin with the raw amino-acid sequence, 128 residues long: Small ribosomal subunit protein uS11 (128 aa).

This sequence belongs to the universal ribosomal protein uS11 family. As to quaternary structure, part of the 30S ribosomal subunit. Interacts with proteins S7 and S18. Binds to IF-3.

In terms of biological role, located on the platform of the 30S subunit, it bridges several disparate RNA helices of the 16S rRNA. Forms part of the Shine-Dalgarno cleft in the 70S ribosome. The sequence is that of Small ribosomal subunit protein uS11 from Acinetobacter baylyi (strain ATCC 33305 / BD413 / ADP1).